A 379-amino-acid polypeptide reads, in one-letter code: MDALRLANTALAVDIFKKLCEKSATDNFVCSPLCISSSLSLIRKGSQGNTASELEKALHFEKVKDPDFGFQLLSSDISKISSANSLKLLKRVYVDNSIECKKDFINSAKKPYPLELETIDFKSQAEEARTQINSSVKELTDGNFETVLNEGSCDENTKIIMLGAASFKGKWVYTFNKSETKEMDFHINKKETKPVQMMHLEARLSIGYINELKTMVLEMPFQSKHFSMLILLPKDIEDDSTGLKKLEQDMTFEKYTHWTNPSMMANSKVKVSLPKFKMENSYDLKDMLKSLGINDAFNEEASDFSEMTESKGISISQAIQKACIEVDEDGTESADVSMERRLMNKEEFLADHPFIYILRHNKTRTIIMLGRYCGPSEAS.

Asn-133, Asn-176, and Asn-361 each carry an N-linked (GlcNAc...) asparagine glycan.

This sequence belongs to the serpin family. Ov-serpin subfamily.

The protein resides in the secreted. It localises to the extracellular space. Its function is as follows. May not exhibit serine protease inhibitory activity. The sequence is that of Serpin B5 (serpinb5) from Xenopus tropicalis (Western clawed frog).